A 118-amino-acid polypeptide reads, in one-letter code: MKIVALTLVAFVALAGASCPYAAPAPAYSAPAAPSGYPAPPCPTNYLFSCQPNLAPAPCAQEAQAPAYGSAGAYTEQVPHYVGSPNREQVQQFHQRIGMAALMEELRGLGQGIQGQQY.

An N-terminal signal peptide occupies residues 1–17 (MKIVALTLVAFVALAGA). Residues 36 to 75 (GYPAPPCPTNYLFSCQPNLAPAPCAQEAQAPAYGSAGAYT) form the VM domain.

The protein belongs to the vitelline membrane family.

The protein resides in the secreted. Major early eggshell protein. The sequence is that of Vitelline membrane protein Vm32E from Drosophila mauritiana (Fruit fly).